Reading from the N-terminus, the 435-residue chain is Tubulin-like protein TubZ (435 aa).

GTP contacts are provided by residues 25–26 (MG), 124–126 (GTG), Asn-185, and Asn-209. The tract at residues 403-435 (QEEKPKKKKLNFGAEPEAEVADDSQPTKKKLSF) is disordered.

It belongs to the FtsZ family. TubZ subfamily. In terms of assembly, polymerizes to form two-stranded filaments and bundles at higher concentration in the presence of GTP. Binds to the TubR-tubC protein DNA complex.

It localises to the cytoplasm. The enzyme catalyses GTP + H2O = GDP + phosphate + H(+). With respect to regulation, GTPase inhibited by GTP-gamma-S, which also stabilizes filaments. Functionally, a tubulin-like, filament forming GTPase; the motor component of the type III plasmid partition system which ensures correct segregation of the pXO1 plasmid. Essential for plasmid replication. The filaments seed from a DNA centromere-like site (tubC)-TubR complex which extends to surround the TubZ filaments. Highly dynamic filaments grow at the plus end and depolymerize at the minus end, a process called treadmilling. TubR-tubC complexes track the depolymerizing minus end of the filament, probably pulling plasmid within the cell. Has a high GTPase activity; in the presence of GTP assembles into dynamic filaments which bind almost exclusively GDP. Filament formation is cooperative, requiring a critical concentration. Formation occurs very quickly and is followed by disassembly as GTP is consumed. Small amounts of GTP-gamma-S stabilize filaments. Has high GTP and dGTPase activity, 6-fold lower ATPase activity. Forms filaments in the presence of ATP that also disassemble. Weakly binds DNA in a GTP-dependent, non-sequence-specific manner; GTP hydrolysis is not required for DNA-binding. This chain is Tubulin-like protein TubZ, found in Bacillus anthracis.